Reading from the N-terminus, the 88-residue chain is Small ribosomal subunit protein bS20 (88 aa).

This sequence belongs to the bacterial ribosomal protein bS20 family.

Binds directly to 16S ribosomal RNA. This is Small ribosomal subunit protein bS20 from Clostridium novyi (strain NT).